Consider the following 257-residue polypeptide: 3-deoxy-manno-octulosonate cytidylyltransferase (257 aa).

Belongs to the KdsB family.

Its subcellular location is the cytoplasm. It catalyses the reaction 3-deoxy-alpha-D-manno-oct-2-ulosonate + CTP = CMP-3-deoxy-beta-D-manno-octulosonate + diphosphate. It functions in the pathway nucleotide-sugar biosynthesis; CMP-3-deoxy-D-manno-octulosonate biosynthesis; CMP-3-deoxy-D-manno-octulosonate from 3-deoxy-D-manno-octulosonate and CTP: step 1/1. The protein operates within bacterial outer membrane biogenesis; lipopolysaccharide biosynthesis. Its function is as follows. Activates KDO (a required 8-carbon sugar) for incorporation into bacterial lipopolysaccharide in Gram-negative bacteria. The sequence is that of 3-deoxy-manno-octulosonate cytidylyltransferase from Halorhodospira halophila (strain DSM 244 / SL1) (Ectothiorhodospira halophila (strain DSM 244 / SL1)).